The sequence spans 1217 residues: ATP-dependent helicase/nuclease subunit A (1217 aa).

One can recognise a UvrD-like helicase ATP-binding domain in the interval 10–475; that stretch reads VIWTDAQWQS…IDLSQNFRSR (466 aa). Residue 31-38 coordinates ATP; sequence AAAGSGKT. The UvrD-like helicase C-terminal domain maps to 476–786; that stretch reads KEVLSTTNYI…RMMTIHSSKG (311 aa).

This sequence belongs to the helicase family. AddA subfamily. As to quaternary structure, heterodimer of AddA and AddB/RexB. Requires Mg(2+) as cofactor.

It carries out the reaction Couples ATP hydrolysis with the unwinding of duplex DNA by translocating in the 3'-5' direction.. It catalyses the reaction ATP + H2O = ADP + phosphate + H(+). In terms of biological role, the heterodimer acts as both an ATP-dependent DNA helicase and an ATP-dependent, dual-direction single-stranded exonuclease. Recognizes the chi site generating a DNA molecule suitable for the initiation of homologous recombination. The AddA nuclease domain is required for chi fragment generation; this subunit has the helicase and 3' -&gt; 5' nuclease activities. The polypeptide is ATP-dependent helicase/nuclease subunit A (Staphylococcus aureus (strain MW2)).